We begin with the raw amino-acid sequence, 338 residues long: Probable cytosolic iron-sulfur protein assembly protein Ciao1 (338 aa).

8 WD repeats span residues 12 to 51, 58 to 97, 102 to 141, 147 to 186, 193 to 232, 234 to 252, 253 to 291, and 302 to 338; these read GHRGRVWGAGWHPRDPVLATCGEDKTIRIWADDGTGRWVP, GHTRTIRDVAWSPCGRFLASASFDATVAIWDRRSGEFECN, GHENEVKSVSWSKSGALLATCSRDKSVWIWEVAQEDEYEC, THSQDVKKVEWHPNEDVLASASYDNTIQLYREDLADSDWS, SHDSTVWSIAFDASGSRLASCSDDQTVRIWQEYKPGNEFG, ACPDGKTPVWKCVCTLSGF, HSRAVYDISWCKKTGLIATACGDDMVRIFREVAGSPANE, and AHSQDANTVEWSPTVAGLLVTTSDDGDVKLWKFEDDE.

The protein belongs to the WD repeat CIA1 family.

Its function is as follows. Essential component of the cytosolic iron-sulfur (Fe/S) protein assembly machinery. Required for the maturation of extramitochondrial Fe/S proteins. This chain is Probable cytosolic iron-sulfur protein assembly protein Ciao1, found in Culex quinquefasciatus (Southern house mosquito).